Consider the following 255-residue polypeptide: Glutamate racemase (255 aa).

Substrate is bound by residues 7–8 (DS) and 39–40 (YG). C70 functions as the Proton donor/acceptor in the catalytic mechanism. 71 to 72 (NT) serves as a coordination point for substrate. The Proton donor/acceptor role is filled by C181. 182-183 (TH) contributes to the substrate binding site.

Belongs to the aspartate/glutamate racemases family.

The enzyme catalyses L-glutamate = D-glutamate. Its pathway is cell wall biogenesis; peptidoglycan biosynthesis. In terms of biological role, provides the (R)-glutamate required for cell wall biosynthesis. The protein is Glutamate racemase of Helicobacter pylori (strain Shi470).